Reading from the N-terminus, the 88-residue chain is Small ribosomal subunit protein bS16 (88 aa).

It belongs to the bacterial ribosomal protein bS16 family.

This is Small ribosomal subunit protein bS16 from Geotalea uraniireducens (strain Rf4) (Geobacter uraniireducens).